Consider the following 309-residue polypeptide: tRNA dimethylallyltransferase (309 aa).

ATP is bound at residue 11–18 (GPTATGKS). 13–18 (TATGKS) is a substrate binding site.

The protein belongs to the IPP transferase family. As to quaternary structure, monomer. Requires Mg(2+) as cofactor.

The catalysed reaction is adenosine(37) in tRNA + dimethylallyl diphosphate = N(6)-dimethylallyladenosine(37) in tRNA + diphosphate. In terms of biological role, catalyzes the transfer of a dimethylallyl group onto the adenine at position 37 in tRNAs that read codons beginning with uridine, leading to the formation of N6-(dimethylallyl)adenosine (i(6)A). The sequence is that of tRNA dimethylallyltransferase from Rhodococcus jostii (strain RHA1).